We begin with the raw amino-acid sequence, 179 residues long: Ribulose bisphosphate carboxylase small subunit, chloroplastic 5 (179 aa).

A chloroplast-targeting transit peptide spans 1–58 (MASSATMLSSVATAACAAPAQASMVAPFVGLKSASAFPVTQKTATGLSTLPSNGGRVQ).

It belongs to the RuBisCO small chain family. Heterohexadecamer of 8 large and 8 small subunits.

It localises to the plastid. The protein resides in the chloroplast. Its function is as follows. RuBisCO catalyzes two reactions: the carboxylation of D-ribulose 1,5-bisphosphate, the primary event in carbon dioxide fixation, as well as the oxidative fragmentation of the pentose substrate. Both reactions occur simultaneously and in competition at the same active site. Although the small subunit is not catalytic it is essential for maximal activity. The sequence is that of Ribulose bisphosphate carboxylase small subunit, chloroplastic 5 from Fritillaria agrestis (Stinkbells).